Reading from the N-terminus, the 1705-residue chain is Clathrin heavy chain 1 (1705 aa).

N-acetylalanine is present on A2. Positions 2–492 (AAANAPIIMK…VDNDLALKIY (491 aa)) are globular terminal domain. WD40-like repeat regions lie at residues 25-67 (FITF…RPIT), 68-113 (ADSA…MPEQ), 114-155 (VAFW…ANLA), 156-205 (NNQI…QALE), 206-270 (AHAA…PDFA), 271-314 (DDFP…ISPD), and 315-343 (PIFL…ATVN). Positions 462–478 (ENWLAEDKLECSEELGD) are binding site for the uncoating ATPase, involved in lattice disassembly. Residues 493-536 (IKARATPKVVAAFAERREFDKILIYSKQVGYTPDYMFLLQTILR) form a flexible linker region. The segment at 537 to 648 (TDPQGAVNFA…QSLKHYSELP (112 aa)) is distal segment. The interval 537 to 1705 (TDPQGAVNFA…PYGMPPMGGY (1169 aa)) is heavy chain arm. 7 CHCR repeats span residues 551–697 (QMEG…QIIV), 700–842 (CKEY…PEDF), 847–986 (ILSV…QLID), 993–1138 (LPES…VSDA), 1142–1283 (FIRA…FRLA), 1288–1434 (LNII…DIIN), and 1437–1580 (LNVL…KECF). Residues 653–1705 (VIVNTHAIEP…PYGMPPMGGY (1053 aa)) are proximal segment. The interval 1227-1536 (AAKIIYAFIS…YIYKKAGRWK (310 aa)) is involved in binding clathrin light chain. Residues 1564–1705 (AEQLLVYFIE…PYGMPPMGGY (142 aa)) are trimerization.

The protein belongs to the clathrin heavy chain family. Clathrin triskelions, composed of 3 heavy chains and 3 light chains, are the basic subunits of the clathrin coat. Interacts with SCYL2B.

It is found in the cytoplasmic vesicle membrane. It localises to the membrane. Its subcellular location is the coated pit. In terms of biological role, clathrin is the major protein of the polyhedral coat of coated pits and vesicles. Mediates endocytosis and is required for a correct polar distribution of PIN auxin transporters. This chain is Clathrin heavy chain 1, found in Arabidopsis thaliana (Mouse-ear cress).